The chain runs to 231 residues: tRNA (guanine-N(1)-)-methyltransferase (231 aa).

Glycine 112 lines the S-adenosyl-L-methionine pocket.

Belongs to the RNA methyltransferase TrmD family. As to quaternary structure, homodimer.

It is found in the cytoplasm. It catalyses the reaction guanosine(37) in tRNA + S-adenosyl-L-methionine = N(1)-methylguanosine(37) in tRNA + S-adenosyl-L-homocysteine + H(+). Its function is as follows. Specifically methylates guanosine-37 in various tRNAs. In Chlorobium chlorochromatii (strain CaD3), this protein is tRNA (guanine-N(1)-)-methyltransferase.